We begin with the raw amino-acid sequence, 130 residues long: Fumarate reductase subunit C (130 aa).

The next 3 membrane-spanning stretches (helical) occupy residues 33–53 (AVTT…LKGG), 60–80 (FVTF…LLGA), and 109–129 (VIKL…GIAL).

The protein belongs to the FrdC family. In terms of assembly, part of an enzyme complex containing four subunits: a flavoprotein (FrdA), an iron-sulfur protein (FrdB), and two hydrophobic anchor proteins (FrdC and FrdD).

The protein localises to the cell inner membrane. Its function is as follows. Two distinct, membrane-bound, FAD-containing enzymes are responsible for the catalysis of fumarate and succinate interconversion; fumarate reductase is used in anaerobic growth, and succinate dehydrogenase is used in aerobic growth. Anchors the catalytic components of the fumarate reductase complex to the cell inner membrane, binds quinones. This Photorhabdus laumondii subsp. laumondii (strain DSM 15139 / CIP 105565 / TT01) (Photorhabdus luminescens subsp. laumondii) protein is Fumarate reductase subunit C.